Reading from the N-terminus, the 410-residue chain is Platelet-activating factor acetylhydrolase IB subunit alpha (410 aa).

The segment at 1 to 38 is required for self-association and interaction with PAFAH1B2 and PAFAH1B3; it reads MVLSQRQRDELNRAIADYLRSNGYEEAYSVFKKEAELD. Residues 1-66 are interaction with NDE1; it reads MVLSQRQRDE…SVIRLQKKVM (66 aa). The interval 1–102 is interaction with NDEL1; sequence MVLSQRQRDE…EWIPRPPEKY (102 aa). In terms of domain architecture, LisH spans 7–39; the sequence is QRDELNRAIADYLRSNGYEEAYSVFKKEAELDM. At Lys-53 the chain carries N6-acetyllysine. Residues 56–82 adopt a coiled-coil conformation; that stretch reads TSVIRLQKKVMELESKLNEAKEEFTSG. Positions 83–410 are interaction with dynein and dynactin; it reads GPLGQKRDPK…DQTVKVWECR (328 aa). WD repeat units follow at residues 106–147, 148–187, 190–229, 232–271, 274–333, 336–377, and 379–410; these read GHRS…RTLK, GHTD…CIRT, GHDH…CVKT, GHRE…CKAE, EHEH…CLMT, GHDN…KTLN, and HEHF…WECR. At Ser-109 the chain carries Phosphoserine. Residues 367–409 are interaction with DCX; sequence YKNKRCMKTLNAHEHFVTSLDFHKTAPYVVTGFVDQTVKVWEC. The interaction with NDEL1 stretch occupies residues 388–410; it reads FHKTAPYVVTGFVDQTVKVWECR.

The protein belongs to the WD repeat LIS1/nudF family. As to quaternary structure, can self-associate. Component of the cytosolic PAF-AH (I) heterotetrameric enzyme, which is composed of PAFAH1B1 (beta), PAFAH1B2 (alpha2) and PAFAH1B3 (alpha1) subunits. The catalytic activity of the enzyme resides in the alpha1 (PAFAH1B3) and alpha2 (PAFAH1B2) subunits, whereas the beta subunit (PAFAH1B1) has regulatory activity. Trimer formation is not essential for the catalytic activity. Interacts with the catalytic dimer of PAF-AH (I) heterotetrameric enzyme: interacts with PAFAH1B2 homodimer (alpha2/alpha2 homodimer), PAFAH1B3 homodimer (alpha1/alpha1 homodimer) and PAFAH1B2-PAFAH1B3 heterodimer (alpha2/alpha1 heterodimer). Interacts with DCX, dynein, dynactin, IQGAP1, KATNB1, NDE1, NDEL1, NUDC and RSN. Interacts with DISC1, and this interaction is enhanced by NDEL1. Interacts with DAB1 when DAB1 is phosphorylated in response to RELN/reelin signaling. Interacts with INTS13. Interacts with DCDC1.

The protein resides in the cytoplasm. It localises to the cytoskeleton. The protein localises to the microtubule organizing center. It is found in the centrosome. Its subcellular location is the spindle. The protein resides in the nucleus membrane. Functionally, regulatory subunit (beta subunit) of the cytosolic type I platelet-activating factor (PAF) acetylhydrolase (PAF-AH (I)), an enzyme that catalyzes the hydrolyze of the acetyl group at the sn-2 position of PAF and its analogs and participates in PAF inactivation. Regulates the PAF-AH (I) activity in a catalytic dimer composition-dependent manner. Positively regulates the activity of the minus-end directed microtubule motor protein dynein. May enhance dynein-mediated microtubule sliding by targeting dynein to the microtubule plus end. Required for several dynein- and microtubule-dependent processes such as the maintenance of Golgi integrity, the peripheral transport of microtubule fragments and the coupling of the nucleus and centrosome. Required during brain development for the proliferation of neuronal precursors and the migration of newly formed neurons from the ventricular/subventricular zone toward the cortical plate. Neuronal migration involves a process called nucleokinesis, whereby migrating cells extend an anterior process into which the nucleus subsequently translocates. During nucleokinesis dynein at the nuclear surface may translocate the nucleus towards the centrosome by exerting force on centrosomal microtubules. Also required for proper activation of Rho GTPases and actin polymerization at the leading edge of locomoting cerebellar neurons and postmigratory hippocampal neurons in response to calcium influx triggered via NMDA receptors. May also play a role in other forms of cell locomotion including the migration of fibroblasts during wound healing. Required for dynein recruitment to microtubule plus ends and BICD2-bound cargos. May modulate the Reelin pathway through interaction of the PAF-AH (I) catalytic dimer with VLDLR. The sequence is that of Platelet-activating factor acetylhydrolase IB subunit alpha from Pan troglodytes (Chimpanzee).